A 284-amino-acid polypeptide reads, in one-letter code: MDGIKKKMIAMKLEKENAMERAVQYEELLKKKEEEREKRENEISELNTKMKQAQIDCDEVQETLQEQMNKLEETEKRATNAEAQVAAMTRRIRLLEEDLEVSSSRLTETLTKLEEASKTAEESERGRKDLEIRSIADDERLNQLEDQQKEAKYIAEDADRKYDEAARKLAIAEVDFERAEARLEAAESKIVELEEELRVVGNNMKALEISEQESAQREESYEETIRDLTERLKAAEQRATEAERQVSKLQNEVDHLEDDLLAEKERYKALSGELDQTFAELTGY.

The stretch at 1-284 forms a coiled coil; the sequence is MDGIKKKMIA…DQTFAELTGY (284 aa). Residues 111 to 131 form a disordered region; it reads TKLEEASKTAEESERGRKDLE.

It belongs to the tropomyosin family. As to quaternary structure, homodimer.

Functionally, tropomyosin, in association with the troponin complex, plays a central role in the calcium dependent regulation of muscle contraction. This Schistosoma japonicum (Blood fluke) protein is Tropomyosin.